Consider the following 548-residue polypeptide: Chaperonin GroEL (548 aa).

ATP-binding positions include 30-33 (TLGP), Lys-51, 87-91 (DGTTT), Gly-415, 479-481 (NAA), and Asp-495.

This sequence belongs to the chaperonin (HSP60) family. As to quaternary structure, forms a cylinder of 14 subunits composed of two heptameric rings stacked back-to-back. Interacts with the co-chaperonin GroES.

The protein resides in the cytoplasm. It carries out the reaction ATP + H2O + a folded polypeptide = ADP + phosphate + an unfolded polypeptide.. Functionally, together with its co-chaperonin GroES, plays an essential role in assisting protein folding. The GroEL-GroES system forms a nano-cage that allows encapsulation of the non-native substrate proteins and provides a physical environment optimized to promote and accelerate protein folding. This is Chaperonin GroEL from Oleidesulfovibrio alaskensis (strain ATCC BAA-1058 / DSM 17464 / G20) (Desulfovibrio alaskensis).